The following is a 110-amino-acid chain: Thiosulfate sulfurtransferase GlpE (110 aa).

One can recognise a Rhodanese domain in the interval 17-105 (RENGAQVVDI…WRSVYPADTS (89 aa)). The active-site Cysteine persulfide intermediate is the cysteine 65.

Belongs to the GlpE family.

The protein localises to the cytoplasm. It catalyses the reaction thiosulfate + hydrogen cyanide = thiocyanate + sulfite + 2 H(+). The enzyme catalyses thiosulfate + [thioredoxin]-dithiol = [thioredoxin]-disulfide + hydrogen sulfide + sulfite + 2 H(+). In terms of biological role, transferase that catalyzes the transfer of sulfur from thiosulfate to thiophilic acceptors such as cyanide or dithiols. May function in a CysM-independent thiosulfate assimilation pathway by catalyzing the conversion of thiosulfate to sulfite, which can then be used for L-cysteine biosynthesis. This chain is Thiosulfate sulfurtransferase GlpE, found in Pseudomonas aeruginosa (strain LESB58).